A 447-amino-acid chain; its full sequence is GA-binding protein subunit beta-2 (447 aa).

ANK repeat units follow at residues 5–34, 37–66, 70–99, 103–132, and 136–166; these read DLGKRLLEAARKGQDDEVRTLMANGAPFTT, LGTSPLHLAAQYGHYSTAEVLLRAGVSRDA, VDRTPLHMAAADGHAHIVELLVRNGADVNA, LKMTALHWATEHHHRDVVELLIKYGADVHA, and FDKSAFDIALEKNNAEILVILQEAMQNQVNA. The residue at position 253 (S253) is a Phosphoserine. Residues 345 to 395 adopt a coiled-coil conformation; sequence EESKEGTERELLQQRLQEANRRAQEYRHQLLKKEQEAEQYRLRLEAMARQQ. The segment at 418 to 447 is disordered; it reads REMEERETEVTGAVGTAEPHTGVSMETVST.

As to quaternary structure, heterotetramer of two alpha and two beta subunits. The C-terminal is necessary for the formation of a heterotetrameric GABP-alpha-2/beta-2 complex, and also facilitates homotypic dimerization. Interacts with ADGRB2.

Its subcellular location is the nucleus. In terms of biological role, may function as transcription factor capable of interacting with purine rich repeats (GA repeats). This Bos taurus (Bovine) protein is GA-binding protein subunit beta-2 (GABPB2).